The sequence spans 448 residues: Probable glycine dehydrogenase (decarboxylating) subunit 1 (448 aa).

This sequence belongs to the GcvP family. N-terminal subunit subfamily. The glycine cleavage system is composed of four proteins: P, T, L and H. In this organism, the P 'protein' is a heterodimer of two subunits.

It carries out the reaction N(6)-[(R)-lipoyl]-L-lysyl-[glycine-cleavage complex H protein] + glycine + H(+) = N(6)-[(R)-S(8)-aminomethyldihydrolipoyl]-L-lysyl-[glycine-cleavage complex H protein] + CO2. Its function is as follows. The glycine cleavage system catalyzes the degradation of glycine. The P protein binds the alpha-amino group of glycine through its pyridoxal phosphate cofactor; CO(2) is released and the remaining methylamine moiety is then transferred to the lipoamide cofactor of the H protein. In Exiguobacterium sibiricum (strain DSM 17290 / CCUG 55495 / CIP 109462 / JCM 13490 / 255-15), this protein is Probable glycine dehydrogenase (decarboxylating) subunit 1.